A 372-amino-acid chain; its full sequence is Aminomethyltransferase (372 aa).

The protein belongs to the GcvT family. As to quaternary structure, the glycine cleavage system is composed of four proteins: P, T, L and H.

The catalysed reaction is N(6)-[(R)-S(8)-aminomethyldihydrolipoyl]-L-lysyl-[protein] + (6S)-5,6,7,8-tetrahydrofolate = N(6)-[(R)-dihydrolipoyl]-L-lysyl-[protein] + (6R)-5,10-methylene-5,6,7,8-tetrahydrofolate + NH4(+). In terms of biological role, the glycine cleavage system catalyzes the degradation of glycine. The chain is Aminomethyltransferase from Synechococcus elongatus (strain ATCC 33912 / PCC 7942 / FACHB-805) (Anacystis nidulans R2).